Here is a 559-residue protein sequence, read N- to C-terminus: Formate--tetrahydrofolate ligase (559 aa).

66–73 (TPPGEGKT) provides a ligand contact to ATP.

It belongs to the formate--tetrahydrofolate ligase family.

It catalyses the reaction (6S)-5,6,7,8-tetrahydrofolate + formate + ATP = (6R)-10-formyltetrahydrofolate + ADP + phosphate. It functions in the pathway one-carbon metabolism; tetrahydrofolate interconversion. The sequence is that of Formate--tetrahydrofolate ligase from Nocardioides sp. (strain ATCC BAA-499 / JS614).